The sequence spans 536 residues: E3 ubiquitin-protein ligase Godzilla (536 aa).

Positions 1-21 are cleaved as a signal peptide; the sequence is MSKRSCQILTLLGLCLVCHEA. The Extracellular portion of the chain corresponds to 22-174; it reads TLVGGHVLVY…DELPFNINTQ (153 aa). In terms of domain architecture, PA spans 89–151; that stretch reads FVALVARGEC…FVGHTTGKAL (63 aa). N-linked (GlcNAc...) asparagine glycosylation is found at N109 and N132. The helical transmembrane segment at 175–195 threads the bilayer; that stretch reads LILPFSILIGMCFIIMVIYMI. Over 196–536 the chain is Cytoplasmic; it reads YKCIREQRRL…HSASDRQFLI (341 aa). The RING-type; atypical zinc-finger motif lies at 235–277; it reads CVICLEDFIEDDKLRVLPCSHPYHTHCIDPWLTENRRVCPICK. 2 disordered regions span residues 287 to 334 and 350 to 372; these read RASR…GAAG and HGTFRRGHAGRNPFEESQSSDDE. Positions 307–334 are enriched in low complexity; the sequence is TPLLQQQQSNGRQVGQVSSASSAGGAAG.

Belongs to the Godzilla family.

The protein resides in the endosome membrane. The catalysed reaction is S-ubiquitinyl-[E2 ubiquitin-conjugating enzyme]-L-cysteine + [acceptor protein]-L-lysine = [E2 ubiquitin-conjugating enzyme]-L-cysteine + N(6)-ubiquitinyl-[acceptor protein]-L-lysine.. It functions in the pathway protein modification; protein ubiquitination. Endosomal E3 ubiquitin-protein ligase that regulates the recycling endosome pathway by mediating ubiquitination of Synaptobrevin (Syb). Also acts as a regulator of transcytosis in wing imaginal disks by catalyzing ubiquitination of Syb: ubiquitination of Syb promotes transcytosis of wingless (wg) to the basolateral surface. The chain is E3 ubiquitin-protein ligase Godzilla from Drosophila melanogaster (Fruit fly).